The primary structure comprises 361 residues: KDEL-tailed cysteine endopeptidase CEP2 (361 aa).

The N-terminal stretch at 1–20 (MKKLLLIFLFSLVILQTACG) is a signal peptide. The propeptide at 21–127 (FDYDDKEIES…FMYDHENLSK (107 aa)) is activation peptide. Asn75 and Asn124 each carry an N-linked (GlcNAc...) asparagine glycan. 3 disulfides stabilise this stretch: Cys149/Cys191, Cys183/Cys224, and Cys282/Cys333. Cys152 is a catalytic residue. Catalysis depends on residues His288 and Asn308. Positions 358-361 (KDEL) match the Prevents secretion from ER motif.

Belongs to the peptidase C1 family. As to expression, expressed in roots, stems, rosette and cauline leaves, flowers, buds and green siliques. Found in the tip of young primary leaves, in very young root tips and at later stages in all tissues of lateral root, including the vascular bundle. Not expressed in lateral root primordia, while directly emerging through the epidermis.

Its subcellular location is the endoplasmic reticulum. In terms of biological role, involved in the final stage of developmental programmed cell death and in intercalation of new cells. Cleaves extensins, thus probably supporting the final cell collapse. This chain is KDEL-tailed cysteine endopeptidase CEP2, found in Arabidopsis thaliana (Mouse-ear cress).